A 444-amino-acid chain; its full sequence is MARSRSRIDRTPFQTEILDLSHDGRGVARREGEGGKVTFVSGALPGEVVMAEQTARSRHFDEARTVEVLQASPQRVTPKCPHFGTCAGCVLQHLDEDQQIVAKQRVLMDNLERIGHVKPGKVLAPLVGESWGYRRKGRFSVRRVEKKDKTLVGFREQDPRFVADLSQCLTVIPEIGTKVEALSTFIESLDGKRDIPQIEFIAGDQAVVLTVRHLQPLSDADRAAWAAFGQQHGFVIYLQSGGVDTVQPLDGQGVPLSFRLAPWDVELAFRPLDFIQVNAKLNEKMIAHALDLLEPGEDERVLDLFCGLGNFTLPLARRVREVVGVEGDAGLVARARENAVRNGLANAQFFSADLTQDQRSTPWMRQGFDKLLLDPPRSGAIEVLQQLPLKQFKRIVYVSCHPGSLARDAGYLVNEQGFTLVSAGAMDMFPHTAHVESIAVFEKR.

Residues 5 to 67 form the TRAM domain; that stretch reads RSRIDRTPFQ…RHFDEARTVE (63 aa). [4Fe-4S] cluster contacts are provided by cysteine 80, cysteine 86, cysteine 89, and cysteine 168. S-adenosyl-L-methionine-binding residues include glutamine 276, phenylalanine 305, asparagine 310, glutamate 326, aspartate 353, and aspartate 374. Residue cysteine 400 is the Nucleophile of the active site.

This sequence belongs to the class I-like SAM-binding methyltransferase superfamily. RNA M5U methyltransferase family. RlmD subfamily.

It carries out the reaction uridine(1939) in 23S rRNA + S-adenosyl-L-methionine = 5-methyluridine(1939) in 23S rRNA + S-adenosyl-L-homocysteine + H(+). Catalyzes the formation of 5-methyl-uridine at position 1939 (m5U1939) in 23S rRNA. The chain is 23S rRNA (uracil(1939)-C(5))-methyltransferase RlmD from Stenotrophomonas maltophilia (strain K279a).